The sequence spans 279 residues: HTH-type transcriptional regulator HdfR (279 aa).

One can recognise an HTH lysR-type domain in the interval 1–58; it reads MDTELLKTFLEVSRTRHFGRAAESLYLTQSAVSFRIRQLENQLGVNLFTRHRNNIRLT. Residues 18–37 constitute a DNA-binding region (H-T-H motif); it reads FGRAAESLYLTQSAVSFRIR.

The protein belongs to the LysR transcriptional regulatory family.

In terms of biological role, negatively regulates the transcription of the flagellar master operon flhDC by binding to the upstream region of the operon. This is HTH-type transcriptional regulator HdfR from Escherichia coli O7:K1 (strain IAI39 / ExPEC).